The sequence spans 329 residues: Src kinase-associated phosphoprotein 2 (329 aa).

The tract at residues 58 to 95 (YAEDSEEEEDWDSNEGGSLQSERTDKDEEACEGAQQAP) is disordered. A compositionally biased stretch (acidic residues) spans 61 to 70 (DSEEEEDWDS). A PH domain is found at 104–207 (SVFKAGYLEK…WVKQIDFVLK (104 aa)). The segment at 240–263 (EDMPSPPPKVEPVSKHPPPTPAVD) is disordered. Pro residues predominate over residues 243 to 260 (PSPPPKVEPVSKHPPPTP). Residues 267–328 (DYANYYQGLW…PKDYLMELYA (62 aa)) enclose the SH3 domain.

It belongs to the SKAP family. Phosphorylated on tyrosines.

The protein localises to the cytoplasm. Its function is as follows. May be involved in B-cell and macrophage adhesion processes. May play a role in src signaling pathway. In Takifugu rubripes (Japanese pufferfish), this protein is Src kinase-associated phosphoprotein 2 (skap2).